The sequence spans 630 residues: PR domain zinc finger protein 5 (630 aa).

In terms of domain architecture, SET spans 8 to 124; that stretch reads DRFSLKSSRV…TDTELLIGYL (117 aa). Residues 167-190 form a C2H2-type 1 zinc finger; it reads YACPQCESSFTSEDILAEHLQTLH. The segment at 199–221 adopts a C2H2-type 2; atypical zinc-finger fold; sequence FKCKNCGKKFPVKQALQRHVLQC. A C2H2-type 3; atypical zinc finger spans residues 234–256; the sequence is FQCSVCNSSFSSASSFEQHQETC. C2H2-type zinc fingers lie at residues 262 to 287, 295 to 317, 320 to 342, 348 to 370, 376 to 398, 404 to 426, 432 to 455, 461 to 483, 489 to 511, 517 to 539, 545 to 567, 573 to 595, and 602 to 625; these read FVCK…ENVH, LICS…RKIH, FDCQ…MITH, YNCE…KVIH, YKCK…KKTH, FQCE…LLIH, FKCH…QVVH, YRCE…KKTH, KICP…IRSH, YQCP…IRTH, YKCS…KRTH, FQCD…KMTH, and AECQ…DNIH.

It belongs to the class V-like SAM-binding methyltransferase superfamily. As to quaternary structure, interacts with EHMT2/G9A, GFI1 and HDAC1. In terms of tissue distribution, widely expressed with highest levels in colon and ovary. Tends to be silenced in breast, colorectal, gastric and liver cancer tissues.

The protein localises to the nucleus. In terms of biological role, sequence-specific DNA-binding transcription factor. Represses transcription at least in part by recruitment of the histone methyltransferase EHMT2/G9A and histone deacetylases such as HDAC1. Regulates hematopoiesis-associated protein-coding and microRNA (miRNA) genes. May regulate the expression of proteins involved in extracellular matrix development and maintenance, including fibrillar collagens, such as COL4A1 and COL11A1, connective tissue components, such as HAPLN1, and molecules regulating cell migration and adhesion, including EDIL3 and TGFB2. May cause G2/M arrest and apoptosis in cancer cells. The polypeptide is PR domain zinc finger protein 5 (PRDM5) (Homo sapiens (Human)).